We begin with the raw amino-acid sequence, 223 residues long: Ethylene-inducing xylanase (223 aa).

Residues 1–19 (MVSFTTLLAGFVAVTGVLS) form the signal peptide. Positions 34 to 223 (QTIGPGTGFN…SSGNANINVS (190 aa)) constitute a GH11 domain. The N-linked (GlcNAc...) asparagine glycan is linked to Asn94. Residue Glu119 is the Nucleophile of the active site. Glu210 functions as the Proton donor in the catalytic mechanism.

The protein belongs to the glycosyl hydrolase 11 (cellulase G) family. As to quaternary structure, interactc with tomato LeEix2 receptor to trigger its internalization.

It is found in the secreted. The catalysed reaction is Endohydrolysis of (1-&gt;4)-beta-D-xylosidic linkages in xylans.. It functions in the pathway glycan degradation; xylan degradation. In terms of biological role, endo-1,4-beta-xylanase involved in the hydrolysis of xylan, a major structural heterogeneous polysaccharide found in plant biomass representing the second most abundant polysaccharide in the biosphere, after cellulose. Acts as an elicitor of plant defense responses in hosts such as tobacco (Nicotiana tabacum) or tomato (Solanum lycopersicum). Induces the production of ethylene and leads alterations in membrane function with rapid efflux of potassium, uptake of calcium, alkalization of the medium, increased leakage of cellular components and necrosis in plant hosts. EIX is translocated through the xylem of the host plant to the leaf mesophyll, leading to host response to pathogen-derived extracellular proteins in tissues distant from the invading pathogen. Greatly enhances the expression of two calcineurin B-like proteins-interacting protein kinases (CIPKs) family members, OsCIPK14 and OsCIPK15, in rice cultured cells. In tomato, triggers the defense response via binding to and subsequent internalization of the LeEix2 receptor. This Hypocrea rufa (Trichoderma viride) protein is Ethylene-inducing xylanase.